The chain runs to 445 residues: Chromosome partition protein MukF (445 aa).

The segment at 213–241 (LSETSNTLKELQDTLQAAGDELQTQILDI) is leucine-zipper.

It belongs to the MukF family. In terms of assembly, interacts, and probably forms a ternary complex, with MukE and MukB via its C-terminal region. The complex formation is stimulated by calcium or magnesium. It is required for an interaction between MukE and MukB.

The protein localises to the cytoplasm. Its subcellular location is the nucleoid. Its function is as follows. Involved in chromosome condensation, segregation and cell cycle progression. May participate in facilitating chromosome segregation by condensation DNA from both sides of a centrally located replisome during cell division. Not required for mini-F plasmid partitioning. Probably acts via its interaction with MukB and MukE. Overexpression results in anucleate cells. It has a calcium binding activity. This Vibrio vulnificus (strain CMCP6) protein is Chromosome partition protein MukF.